The sequence spans 238 residues: 1-(5-phosphoribosyl)-5-[(5-phosphoribosylamino)methylideneamino] imidazole-4-carboxamide isomerase (238 aa).

Asp8 serves as the catalytic Proton acceptor. Asp130 acts as the Proton donor in catalysis.

The protein belongs to the HisA/HisF family.

The protein resides in the cytoplasm. The enzyme catalyses 1-(5-phospho-beta-D-ribosyl)-5-[(5-phospho-beta-D-ribosylamino)methylideneamino]imidazole-4-carboxamide = 5-[(5-phospho-1-deoxy-D-ribulos-1-ylimino)methylamino]-1-(5-phospho-beta-D-ribosyl)imidazole-4-carboxamide. It participates in amino-acid biosynthesis; L-histidine biosynthesis; L-histidine from 5-phospho-alpha-D-ribose 1-diphosphate: step 4/9. The polypeptide is 1-(5-phosphoribosyl)-5-[(5-phosphoribosylamino)methylideneamino] imidazole-4-carboxamide isomerase (Methanococcus maripaludis (strain C5 / ATCC BAA-1333)).